The chain runs to 313 residues: tRNA dimethylallyltransferase (313 aa).

ATP is bound at residue 10-17 (GPTASGKT). 12 to 17 (TASGKT) serves as a coordination point for substrate. Interaction with substrate tRNA stretches follow at residues 35-38 (DSAM), 159-163 (QRIQR), and 240-245 (RCVGYR).

This sequence belongs to the IPP transferase family. As to quaternary structure, monomer. Requires Mg(2+) as cofactor.

It carries out the reaction adenosine(37) in tRNA + dimethylallyl diphosphate = N(6)-dimethylallyladenosine(37) in tRNA + diphosphate. Functionally, catalyzes the transfer of a dimethylallyl group onto the adenine at position 37 in tRNAs that read codons beginning with uridine, leading to the formation of N6-(dimethylallyl)adenosine (i(6)A). This chain is tRNA dimethylallyltransferase, found in Legionella pneumophila (strain Paris).